We begin with the raw amino-acid sequence, 233 residues long: Lipoprotein-releasing system ATP-binding protein LolD (233 aa).

Residues 9–233 enclose the ABC transporter domain; sequence LAINAVSKVF…GILSQSETHR (225 aa). 45–52 lines the ATP pocket; it reads GSSGSGKS.

Belongs to the ABC transporter superfamily. Lipoprotein translocase (TC 3.A.1.125) family. As to quaternary structure, the complex is composed of two ATP-binding proteins (LolD) and two transmembrane proteins (LolC and LolE).

It localises to the cell inner membrane. Its function is as follows. Part of the ABC transporter complex LolCDE involved in the translocation of mature outer membrane-directed lipoproteins, from the inner membrane to the periplasmic chaperone, LolA. Responsible for the formation of the LolA-lipoprotein complex in an ATP-dependent manner. This Shewanella denitrificans (strain OS217 / ATCC BAA-1090 / DSM 15013) protein is Lipoprotein-releasing system ATP-binding protein LolD.